Reading from the N-terminus, the 144-residue chain is 6,7-dimethyl-8-ribityllumazine synthase (144 aa).

5-amino-6-(D-ribitylamino)uracil-binding positions include Phe-21, 56-58, and 80-82; these read AYE and AVI. 85–86 provides a ligand contact to (2S)-2-hydroxy-3-oxobutyl phosphate; the sequence is GT. His-88 serves as the catalytic Proton donor. Phe-113 is a 5-amino-6-(D-ribitylamino)uracil binding site. Arg-127 is a binding site for (2S)-2-hydroxy-3-oxobutyl phosphate.

Belongs to the DMRL synthase family. In terms of assembly, forms an icosahedral capsid composed of 60 subunits, arranged as a dodecamer of pentamers.

The enzyme catalyses (2S)-2-hydroxy-3-oxobutyl phosphate + 5-amino-6-(D-ribitylamino)uracil = 6,7-dimethyl-8-(1-D-ribityl)lumazine + phosphate + 2 H2O + H(+). It functions in the pathway cofactor biosynthesis; riboflavin biosynthesis; riboflavin from 2-hydroxy-3-oxobutyl phosphate and 5-amino-6-(D-ribitylamino)uracil: step 1/2. Its function is as follows. Catalyzes the formation of 6,7-dimethyl-8-ribityllumazine by condensation of 5-amino-6-(D-ribitylamino)uracil with 3,4-dihydroxy-2-butanone 4-phosphate. This is the penultimate step in the biosynthesis of riboflavin. The sequence is that of 6,7-dimethyl-8-ribityllumazine synthase (ribH) from Photobacterium leiognathi.